The following is a 182-amino-acid chain: Antigenic integral membrane glycoprotein (182 aa).

An N-terminal signal peptide occupies residues 1–35; it reads MFSFHERMKKKHVTIRVYKHERILVFLFVLFISTT. 2 N-linked (GlcNAc...) asparagine glycosylation sites follow: N88 and N120. A helical membrane pass occupies residues 162-180; it reads EFLMSSCIVITLNLFIFMY. C168 is lipidated: S-palmitoyl cysteine.

The protein localises to the cell membrane. In terms of biological role, major antigen in the surface tegument. The sequence is that of Antigenic integral membrane glycoprotein from Schistosoma mansoni (Blood fluke).